Reading from the N-terminus, the 126-residue chain is Small ribosomal subunit protein uS8 (126 aa).

Belongs to the universal ribosomal protein uS8 family. In terms of assembly, part of the 30S ribosomal subunit. Contacts proteins S5 and S12.

Its function is as follows. One of the primary rRNA binding proteins, it binds directly to 16S rRNA central domain where it helps coordinate assembly of the platform of the 30S subunit. This chain is Small ribosomal subunit protein uS8, found in Oleidesulfovibrio alaskensis (strain ATCC BAA-1058 / DSM 17464 / G20) (Desulfovibrio alaskensis).